A 195-amino-acid polypeptide reads, in one-letter code: Molybdopterin synthase catalytic subunit (195 aa).

A disordered region spans residues 1-37; it reads MSARPEPQPGSERNATEPLPSHLDPTTYPRTLTTTHG. Residues 25–37 show a composition bias toward low complexity; it reads PTTYPRTLTTTHG. Substrate is bound by residues 141 to 142, Lys157, and 164 to 166; these read HR and KRE.

It belongs to the MoaE family. MOCS2B subfamily. Heterotetramer; composed of 2 small (MOCS2A) and 2 large (MOCS2B) subunits.

The protein localises to the cytoplasm. It carries out the reaction 2 [molybdopterin-synthase sulfur-carrier protein]-C-terminal-Gly-aminoethanethioate + cyclic pyranopterin phosphate + H2O = molybdopterin + 2 [molybdopterin-synthase sulfur-carrier protein]-C-terminal Gly-Gly + 2 H(+). Its pathway is cofactor biosynthesis; molybdopterin biosynthesis. Catalytic subunit of the molybdopterin synthase complex, a complex that catalyzes the conversion of precursor Z into molybdopterin. Acts by mediating the incorporation of 2 sulfur atoms from thiocarboxylated MOCS2A into precursor Z to generate a dithiolene group. This chain is Molybdopterin synthase catalytic subunit, found in Emericella nidulans (strain FGSC A4 / ATCC 38163 / CBS 112.46 / NRRL 194 / M139) (Aspergillus nidulans).